Consider the following 492-residue polypeptide: uncharacterized protein (492 aa).

The first 22 residues, 1 to 22, serve as a signal peptide directing secretion; the sequence is MIRPNMFALLMLVVLAITSVNA. N92, N97, N119, N146, N213, N267, and N458 each carry an N-linked (GlcNAc...) asparagine; by host glycan.

The protein localises to the secreted. This is an uncharacterized protein from Acanthamoeba polyphaga (Amoeba).